We begin with the raw amino-acid sequence, 271 residues long: Formamidopyrimidine-DNA glycosylase (271 aa).

The Schiff-base intermediate with DNA role is filled by P2. E3 (proton donor) is an active-site residue. K58 acts as the Proton donor; for beta-elimination activity in catalysis. H92, R111, and R152 together coordinate DNA. The segment at 237–271 (TVYGREGEPCKQCGRVLKHAMIGQRATVWCGSCQR) adopts an FPG-type zinc-finger fold. R261 serves as the catalytic Proton donor; for delta-elimination activity.

The protein belongs to the FPG family. In terms of assembly, monomer. Zn(2+) serves as cofactor.

The enzyme catalyses Hydrolysis of DNA containing ring-opened 7-methylguanine residues, releasing 2,6-diamino-4-hydroxy-5-(N-methyl)formamidopyrimidine.. The catalysed reaction is 2'-deoxyribonucleotide-(2'-deoxyribose 5'-phosphate)-2'-deoxyribonucleotide-DNA = a 3'-end 2'-deoxyribonucleotide-(2,3-dehydro-2,3-deoxyribose 5'-phosphate)-DNA + a 5'-end 5'-phospho-2'-deoxyribonucleoside-DNA + H(+). Functionally, involved in base excision repair of DNA damaged by oxidation or by mutagenic agents. Acts as a DNA glycosylase that recognizes and removes damaged bases. Has a preference for oxidized purines, such as 7,8-dihydro-8-oxoguanine (8-oxoG). Has AP (apurinic/apyrimidinic) lyase activity and introduces nicks in the DNA strand. Cleaves the DNA backbone by beta-delta elimination to generate a single-strand break at the site of the removed base with both 3'- and 5'-phosphates. In Xanthomonas oryzae pv. oryzae (strain MAFF 311018), this protein is Formamidopyrimidine-DNA glycosylase.